Consider the following 26-residue polypeptide: SCQKWMWLCDEERKCCEDMVCKLWCK.

Intrachain disulfides connect Cys2-Cys16, Cys9-Cys21, and Cys15-Cys25.

It belongs to the neurotoxin 30 (phrixotoxin) family. As to expression, expressed by the venom gland.

Its subcellular location is the secreted. Functionally, gating-modifier toxin that non-selectively inhibits voltage-gated sodium channel Nav by shifting the threshold for channel activation to more positive potentials. This toxin moderately inhibits human Nav1.2/SCN2A (IC(50)=404 nM), Nav1.5/SCN5A (IC(50)=218 nM) and Nav1.7/SCN9A (IC(50)=333 nM). Inhibition of Nav1.7 is voltage-dependent, with lower inhibition at more positive test pulses. The polypeptide is Mu-theraphotoxin-Phlo2a (Phlogius sp. (Tarantula spider)).